A 471-amino-acid polypeptide reads, in one-letter code: Glutamate--tRNA ligase (471 aa).

Positions 9–19 (PSPTGFLHVGG) match the 'HIGH' region motif. Zn(2+)-binding residues include Cys98, Cys100, Cys125, and Asp127. The 'KMSKS' region motif lies at 237 to 241 (KLSKR). Lys240 serves as a coordination point for ATP.

It belongs to the class-I aminoacyl-tRNA synthetase family. Glutamate--tRNA ligase type 1 subfamily. As to quaternary structure, monomer. Requires Zn(2+) as cofactor.

The protein resides in the cytoplasm. It carries out the reaction tRNA(Glu) + L-glutamate + ATP = L-glutamyl-tRNA(Glu) + AMP + diphosphate. In terms of biological role, catalyzes the attachment of glutamate to tRNA(Glu) in a two-step reaction: glutamate is first activated by ATP to form Glu-AMP and then transferred to the acceptor end of tRNA(Glu). The sequence is that of Glutamate--tRNA ligase from Aeromonas hydrophila subsp. hydrophila (strain ATCC 7966 / DSM 30187 / BCRC 13018 / CCUG 14551 / JCM 1027 / KCTC 2358 / NCIMB 9240 / NCTC 8049).